The sequence spans 345 residues: 3-dehydroquinate synthase (345 aa).

NAD(+) is bound by residues 86–90 (GALLD), 110–111 (TT), K123, and K132. Zn(2+) is bound by residues E165, H229, and H243.

This sequence belongs to the sugar phosphate cyclases superfamily. Dehydroquinate synthase family. NAD(+) serves as cofactor. The cofactor is Co(2+). Requires Zn(2+) as cofactor.

The protein resides in the cytoplasm. The catalysed reaction is 7-phospho-2-dehydro-3-deoxy-D-arabino-heptonate = 3-dehydroquinate + phosphate. It functions in the pathway metabolic intermediate biosynthesis; chorismate biosynthesis; chorismate from D-erythrose 4-phosphate and phosphoenolpyruvate: step 2/7. Catalyzes the conversion of 3-deoxy-D-arabino-heptulosonate 7-phosphate (DAHP) to dehydroquinate (DHQ). This is 3-dehydroquinate synthase from Pyrobaculum aerophilum (strain ATCC 51768 / DSM 7523 / JCM 9630 / CIP 104966 / NBRC 100827 / IM2).